The sequence spans 171 residues: Flavodoxin (171 aa).

One can recognise a Flavodoxin-like domain in the interval 4-165 (IGIFFGSDTG…RIKQWVKQII (162 aa)).

The protein belongs to the flavodoxin family. FMN is required as a cofactor.

In terms of biological role, low-potential electron donor to a number of redox enzymes. The polypeptide is Flavodoxin (fldA) (Buchnera aphidicola subsp. Acyrthosiphon pisum (strain APS) (Acyrthosiphon pisum symbiotic bacterium)).